Reading from the N-terminus, the 1381-residue chain is Peroxisomal ATPase PEX6 (1381 aa).

Polar residues predominate over residues Met1–Ser10. Disordered regions lie at residues Met1–Pro23, Val247–Ser315, Thr333–Arg374, and Tyr467–Ala499. The span at Ser11–Gln20 shows a compositional bias: basic residues. Acidic residues-rich tracts occupy residues Ala270–Asp284 and Thr296–Ser315. Polar residues-rich tracts occupy residues Thr333–Pro345, Gly355–Thr367, and Phe487–Ala499. Gly1031–Thr1038 is a binding site for ATP. 2 stretches are compositionally biased toward basic and acidic residues: residues Gly1294–Ala1305 and Ser1337–Asp1350. The interval Gly1294–Asp1381 is disordered. Acidic residues predominate over residues Gly1372–Asp1381.

Belongs to the AAA ATPase family. As to quaternary structure, interacts with PEX1; forming the PEX1-PEX6 AAA ATPase complex, which is composed of a heterohexamer formed by a trimer of PEX1-PEX6 dimers.

The protein localises to the cytoplasm. Its subcellular location is the cytosol. It is found in the peroxisome membrane. The catalysed reaction is ATP + H2O = ADP + phosphate + H(+). Component of the PEX1-PEX6 AAA ATPase complex, a protein dislocase complex that mediates the ATP-dependent extraction of the PEX5 receptor from peroxisomal membranes, an essential step for PEX5 recycling. Specifically recognizes PEX5 monoubiquitinated at 'Cys-6', and pulls it out of the peroxisome lumen through the PEX2-PEX10-PEX12 retrotranslocation channel. Extraction by the PEX1-PEX6 AAA ATPase complex is accompanied by unfolding of the TPR repeats and release of bound cargo from PEX5. The chain is Peroxisomal ATPase PEX6 (pex-6) from Neurospora crassa (strain ATCC 24698 / 74-OR23-1A / CBS 708.71 / DSM 1257 / FGSC 987).